The following is a 223-amino-acid chain: Icarapin (223 aa).

The first 19 residues, Met-1 to Ser-19, serve as a signal peptide directing secretion. N-linked (GlcNAc...) asparagine glycosylation is found at Asn-126, Asn-142, Asn-168, and Asn-193. The span at Leu-186 to Val-203 shows a compositional bias: polar residues. A disordered region spans residues Leu-186–Ala-223.

Expressed by the venom duct.

The protein resides in the secreted. This is Icarapin from Apis mellifera carnica (Carniolan honeybee).